The sequence spans 370 residues: MTEPVRVQVQTANPYPVIIGRGLLGELVDELTGTRTVAIFHQPPLAETAEAVRAALAEKGIDAHRIEIPDAEDGKDLAVAGFCWEVLGRIGLTRSDAVVSLGGGAATDLAGFVAATWMRGVRVIHVPTTLLAMVDAAVGGKTGINTEAGKNLVGSFHEPSAVLIDLATLETVPRNEIVAGMAEVVKTGFIADPVILELIEKDPEAALDPTGTVLPELIRRSVEVKAKVVAADLRESDLREILNYGHTLGHAIERRERYRWRHGAAVAVGLVFAAELGRLAGRLDDATADRHRTILELVGLPTTYDADAFGQLVEGMQTDKKNRAGVLRFVVLDGLAKPGRLEGPDPSLLVAAYSAVAREGTPGTGGAVLL.

Residues 70–75 (DAEDGK), 104–108 (GAATD), 128–129 (TT), Lys-141, Lys-150, and 168–171 (TLET) each bind NAD(+). The Zn(2+) site is built by Glu-183, His-246, and His-262.

The protein belongs to the sugar phosphate cyclases superfamily. Dehydroquinate synthase family. Requires Co(2+) as cofactor. Zn(2+) is required as a cofactor. NAD(+) serves as cofactor.

The protein localises to the cytoplasm. The enzyme catalyses 7-phospho-2-dehydro-3-deoxy-D-arabino-heptonate = 3-dehydroquinate + phosphate. The protein operates within metabolic intermediate biosynthesis; chorismate biosynthesis; chorismate from D-erythrose 4-phosphate and phosphoenolpyruvate: step 2/7. Functionally, catalyzes the conversion of 3-deoxy-D-arabino-heptulosonate 7-phosphate (DAHP) to dehydroquinate (DHQ). This Rhodococcus opacus (strain B4) protein is 3-dehydroquinate synthase.